Here is a 305-residue protein sequence, read N- to C-terminus: Probable xyloglucan endotransglucosylase/hydrolase protein 8 (305 aa).

Positions 1–31 are cleaved as a signal peptide; that stretch reads METERRIITSCSAMTALFLFMTALMASSSIA. The region spanning 32 to 231 is the GH16 domain; that stretch reads ATPTQSFEDN…WKKAPFVSSY (200 aa). N-linked (GlcNAc...) asparagine glycosylation is found at asparagine 61 and asparagine 66. Catalysis depends on glutamate 115, which acts as the Nucleophile. Residue glutamate 119 is the Proton donor of the active site. Glutamate 119 serves as a coordination point for xyloglucan. Asparagine 123 is a glycosylation site (N-linked (GlcNAc...) asparagine). 132–134 contributes to the xyloglucan binding site; the sequence is QTN. Asparagine 138 carries an N-linked (GlcNAc...) asparagine glycan. Residues 142 to 144, 210 to 211, and glycine 215 each bind xyloglucan; these read NRE and DW. 2 disulfides stabilise this stretch: cysteine 239–cysteine 248 and cysteine 286–cysteine 299. Arginine 291 contributes to the xyloglucan binding site.

Belongs to the glycosyl hydrolase 16 family. XTH group 1 subfamily. Post-translationally, contains at least one intrachain disulfide bond essential for its enzymatic activity.

It is found in the secreted. The protein localises to the cell wall. It localises to the extracellular space. Its subcellular location is the apoplast. It carries out the reaction breaks a beta-(1-&gt;4) bond in the backbone of a xyloglucan and transfers the xyloglucanyl segment on to O-4 of the non-reducing terminal glucose residue of an acceptor, which can be a xyloglucan or an oligosaccharide of xyloglucan.. Functionally, catalyzes xyloglucan endohydrolysis (XEH) and/or endotransglycosylation (XET). Cleaves and religates xyloglucan polymers, an essential constituent of the primary cell wall, and thereby participates in cell wall construction of growing tissues. The protein is Probable xyloglucan endotransglucosylase/hydrolase protein 8 (XTH8) of Arabidopsis thaliana (Mouse-ear cress).